Consider the following 10061-residue polypeptide: MATH and LRR domain-containing protein PFE0570w (10061 aa).

3 disordered regions span residues 166 to 210 (DMDN…EKKN), 244 to 471 (NNSD…NDIN), and 1004 to 1170 (DDQK…DTSF). Residues 169–179 (NNPNNHVSNNG) are compositionally biased toward polar residues. Residues 193 to 205 (TSNSIHKNNNTNI) are compositionally biased toward low complexity. Residues 270–282 (KKSDNNNDKKNDD) are compositionally biased toward basic and acidic residues. Over residues 285 to 320 (NNNNNNNNNNNNNNNNNDNHVCTSNNQPNTINKQNN) the composition is skewed to low complexity. The segment covering 328–338 (DQNGRTKITPQ) has biased composition (polar residues). Residues 338–366 (QNVNQKEKEIKNVVKEKNNFNREEKDITN) adopt a coiled-coil conformation. Residues 342–365 (QKEKEIKNVVKEKNNFNREEKDIT) are compositionally biased toward basic and acidic residues. The segment covering 366–375 (NSDDYDENST) has biased composition (acidic residues). 2 stretches are compositionally biased toward polar residues: residues 376 to 389 (DESC…TSSE) and 421 to 437 (VPSN…SAEN). The stretch at 431 to 469 (NVKSAENCNKEKKKKKKKKKKELNNDNKDNTLNNETMND) forms a coiled coil. Residues 441–451 (EKKKKKKKKKK) show a composition bias toward basic residues. The segment covering 460–471 (NTLNNETMNDIN) has biased composition (low complexity). The span at 1025 to 1037 (NEEKPNVNKEGNI) shows a compositional bias: basic and acidic residues. Residues 1047–1057 (NKNKNNNNNNN) show a composition bias toward low complexity. A compositionally biased stretch (basic and acidic residues) spans 1058–1132 (DKNDKNDKND…KKKKNGKEQN (75 aa)). Residues 1133 to 1165 (EDSTESDDESSVIDDNYIDDDSCDCDSESDSID) show a composition bias toward acidic residues. The MATH domain maps to 1328–1458 (NGKIELYIPN…SGGLLIKGKV (131 aa)). The segment at 1651–1698 (GGNLQNEQKGDEDVKKEDVKKENVNKEEIKNGNNNNNNDENENEVDDN) is disordered. Over residues 1658–1680 (QKGDEDVKKEDVKKENVNKEEIK) the composition is skewed to basic and acidic residues. Positions 1916 to 1948 (NYLSNLNKVKININDLNNNIVDVNNSIHNIEKE) form a coiled coil. The segment covering 1973–1995 (HKETSSIQNKGKEKSNNNIKSDD) has biased composition (basic and acidic residues). 4 disordered regions span residues 1973–1998 (HKET…DNNN), 2155–2245 (LNKS…PSYK), 2427–2566 (YSDD…NNIK), and 3120–3139 (SNET…NEMK). Residues 2216 to 2228 (NNDDKDDDDDDSY) show a composition bias toward acidic residues. The segment covering 2235 to 2245 (SDGKKNDPSYK) has biased composition (basic and acidic residues). Positions 2475 to 2484 (NNNNNNNNMM) are enriched in low complexity. Composition is skewed to basic and acidic residues over residues 2487-2496 (DDNKVNKNEE) and 2505-2527 (QIKE…RNED). 2 stretches are compositionally biased toward low complexity: residues 2552–2564 (NNNN…NNNN) and 3121–3133 (NETN…NRTN). Residues 2555–2580 (NNNNNNNNNNIKRLDDSYNKLLKNKN) are a coiled coil. A helical transmembrane segment spans residues 3398 to 3418 (KLILKKIFMYLNIICMIIKYI). Disordered stretches follow at residues 3802–3826 (STND…YSKK), 3847–3890 (LTSG…DNNN), and 3919–3953 (ESND…EKKS). Basic and acidic residues predominate over residues 3809–3822 (VDRSDDSESNDDKK). Residues 3851-3890 (NSSSKNSKKNSNNESIQMDNTNNSNSNNNNKNDNNNDNNN) are compositionally biased toward low complexity. Positions 3926 to 3941 (KNQNIQSNEQSVTPNR) are enriched in polar residues. Over residues 3942-3953 (NIEENKDHEKKS) the composition is skewed to basic and acidic residues. Residues 3977 to 4001 (EHLGNATAVLNILQKKLENEELKKL) are a coiled coil. Positions 4039-4065 (VSAHKEKNVKTDSSDDKKKKEDNENNN) are enriched in basic and acidic residues. Disordered regions lie at residues 4039–4074 (VSAH…IIHN), 4155–4180 (KGNN…NNMG), 4352–4414 (SNNN…NNNN), 4919–4943 (NKRK…DNDN), 4991–5030 (DGLN…KNEK), and 5179–5207 (SKIA…KSNL). The segment covering 4157-4178 (NNSKDNNNNNNNNNNNNNNKNN) has biased composition (low complexity). The stretch at 4399-4424 (NNNNNNNNNNNNNNNNVNKEIIKLNS) forms a coiled coil. 3 stretches are compositionally biased toward low complexity: residues 4929-4943 (NNNN…DNDN), 5004-5019 (NMNN…NNSN), and 5185-5202 (NGNN…NNNN). The stretch at 5006–5046 (NNVKNKNNNNNNSNNKRKKNEKNEKIDKIEQFLHESELEKD) forms a coiled coil. Coiled-coil stretches lie at residues 5486-5563 (NNNN…NIYE), 5728-5810 (DVLK…DKEE), and 5900-6022 (MNND…INNY). 3 stretches are compositionally biased toward basic and acidic residues: residues 5716 to 5732 (KDAK…VLKD), 5738 to 5811 (SNKE…KEEP), and 5909 to 5953 (NKNK…KKDN). Disordered stretches follow at residues 5716-5816 (KDAK…QINE), 5892-6009 (EIIN…KKLK), 6123-6142 (KSET…VDGK), 6299-6338 (NDSI…DKGE), 6722-6760 (NMNN…NNNI), 7585-7730 (EDML…VEEK), and 7744-7787 (DLLS…KKSS). The segment covering 5954-5968 (NNSNNNNNNNNLSNN) has biased composition (low complexity). Acidic residues predominate over residues 5969–5978 (GEEDPNDSDS). Over residues 5991–6003 (NKNINDDSDDNNK) the composition is skewed to basic and acidic residues. Residues 6129 to 6138 (SNKNVESNDN) show a composition bias toward polar residues. Composition is skewed to low complexity over residues 6314 to 6333 (SNSN…NNNN) and 6722 to 6759 (NMNN…NNNN). Residues 6719 to 6743 (NMNNMNNNNNNNNNNNNNNNNNNNN) adopt a coiled-coil conformation. A compositionally biased stretch (basic and acidic residues) spans 7585–7599 (EDMLHSKKTDVIQHG). Acidic residues predominate over residues 7600 to 7685 (DEEEDDEEDD…EHINEEEQED (86 aa)). Coiled coils occupy residues 7601 to 7637 (EEED…DIED), 7710 to 7813 (NTKI…NKNE), 7934 to 7961 (KTDE…IDNE), and 8217 to 8241 (NINN…GKRE). The span at 7749-7765 (SKKKNHKDKRNASKNKN) shows a compositional bias: basic residues. Residues 7766 to 7786 (KNKDILKKNENNINDEKEKKS) show a composition bias toward basic and acidic residues. Disordered regions lie at residues 8189 to 8252 (ETGG…GGEE), 8293 to 8380 (GKVS…IIMS), and 8474 to 8497 (KKKN…MDEE). Residues 8218–8242 (INNKEKETNKNEEQQQGEAEGKREG) are compositionally biased toward basic and acidic residues. Positions 8243–8252 (EGEEGEGGEE) are enriched in acidic residues. Positions 8305-8314 (LLNDKEHEKD) are enriched in basic and acidic residues. Acidic residues predominate over residues 8315-8363 (NEDNDEDNDEDDDDEDDDEDDEDDDDDDDDDDDDDDDDDYDEDYDEDYD). Positions 8364 to 8374 (EKLVENKKNER) are enriched in basic and acidic residues. Low complexity predominate over residues 8478–8492 (YSNNNIYNNNSSNKV). Coiled coils occupy residues 8644-8697 (SETL…ELNN), 8882-8907 (QYLE…VDNY), and 9219-9247 (IDMK…SNNN). Disordered stretches follow at residues 9759–9779 (TIPR…NNNS), 9891–9926 (SNTS…SSSN), and 9985–10061 (KNNS…NNIY). Low complexity-rich tracts occupy residues 9764-9779 (NTTT…NNNS), 9899-9926 (NSSN…SSSN), and 9986-10022 (NNSI…NNNT). Positions 10031 to 10041 (IFQQNQNHSDT) are enriched in polar residues. Residues 10042-10061 (NNNNNNNNKNNSNNNNNNIY) are compositionally biased toward low complexity.

It is found in the membrane. This chain is MATH and LRR domain-containing protein PFE0570w, found in Plasmodium falciparum (isolate 3D7).